Here is a 188-residue protein sequence, read N- to C-terminus: Probable nicotinate-nucleotide adenylyltransferase (188 aa).

It belongs to the NadD family.

The catalysed reaction is nicotinate beta-D-ribonucleotide + ATP + H(+) = deamido-NAD(+) + diphosphate. Its pathway is cofactor biosynthesis; NAD(+) biosynthesis; deamido-NAD(+) from nicotinate D-ribonucleotide: step 1/1. Functionally, catalyzes the reversible adenylation of nicotinate mononucleotide (NaMN) to nicotinic acid adenine dinucleotide (NaAD). This is Probable nicotinate-nucleotide adenylyltransferase from Acholeplasma laidlawii (strain PG-8A).